The primary structure comprises 190 residues: Biphenyl-2,3-diol 1,2-dioxygenase 3 (190 aa).

One can recognise a VOC domain in the interval 6 to 125 (RLAHFVLQTN…DGNMVELQID (120 aa)). Residues H9, H73, and E121 each coordinate Fe cation.

Belongs to the extradiol ring-cleavage dioxygenase family. Homohexamer. Fe(2+) serves as cofactor.

The enzyme catalyses biphenyl-2,3-diol + O2 = 2-hydroxy-6-oxo-6-phenylhexa-2,4-dienoate + H(+). It functions in the pathway xenobiotic degradation; biphenyl degradation; 2-hydroxy-2,4-pentadienoate and benzoate from biphenyl: step 3/4. The protein is Biphenyl-2,3-diol 1,2-dioxygenase 3 (bphC3) of Rhodococcus globerulus.